The primary structure comprises 1409 residues: DNA-directed RNA polymerase subunit beta' (1409 aa).

Cysteine 70, cysteine 72, cysteine 85, and cysteine 88 together coordinate Zn(2+). Mg(2+)-binding residues include aspartate 458, aspartate 460, and aspartate 462. The Zn(2+) site is built by cysteine 813, cysteine 887, cysteine 894, and cysteine 897.

This sequence belongs to the RNA polymerase beta' chain family. In terms of assembly, the RNAP catalytic core consists of 2 alpha, 1 beta, 1 beta' and 1 omega subunit. When a sigma factor is associated with the core the holoenzyme is formed, which can initiate transcription. Mg(2+) serves as cofactor. It depends on Zn(2+) as a cofactor.

It carries out the reaction RNA(n) + a ribonucleoside 5'-triphosphate = RNA(n+1) + diphosphate. DNA-dependent RNA polymerase catalyzes the transcription of DNA into RNA using the four ribonucleoside triphosphates as substrates. This is DNA-directed RNA polymerase subunit beta' from Delftia acidovorans (strain DSM 14801 / SPH-1).